The primary structure comprises 830 residues: Nucleolar complex-associated protein 3 (830 aa).

Disordered stretches follow at residues 1-22 (MGKN…DVAE), 67-86 (KYEE…GNGE), 112-169 (KSKL…EETP), 391-436 (GKPN…KIRD), and 802-830 (LQSE…KKQI). Coiled coils occupy residues 61–81 (VMTV…LQEE) and 111–156 (KKSK…HEKD). Residues 67–84 (KYEEERSKRKTLQEEKGN) are compositionally biased toward basic and acidic residues. Residues 118–129 (AETDEAEKDVLE) are compositionally biased toward acidic residues. Basic and acidic residues predominate over residues 130–140 (DEHVLNKSQRR). The Nuclear localization signal 1 signature appears at 138-145 (QRREKAKK). A compositionally biased stretch (basic residues) spans 141 to 150 (EKAKKSKREA). A compositionally biased stretch (acidic residues) spans 159–168 (DEILQEEEET). Over residues 391 to 400 (GKPNKEDEHN) the composition is skewed to basic and acidic residues. Residues 400–429 (NKKYKKNNKRKTQEEQNQVQENERKKSKKD) are a coiled coil. The Nuclear localization signal 2 signature appears at 408–415 (KRKTQEEQ). A compositionally biased stretch (basic and acidic residues) spans 420–436 (ENERKKSKKDMMSKIRD). Positions 806–813 (EKKPLKKQ) match the Nuclear localization signal 3 motif. Residues 817–830 (VKKKLKNPKSKKQI) show a composition bias toward basic residues.

This sequence belongs to the CBF/MAK21 family. As to quaternary structure, component of nucleolar complexes. Interacts with RBL and NOC2 in both the nucleolus and nucleoplasm.

It localises to the nucleus. It is found in the nucleolus. Its subcellular location is the nucleoplasm. In terms of biological role, may be required for synthesis of 60S ribosomal subunits and the transport of pre-ribosomes from the nucleoplasm to the cytoplasm. Also required for initiation of DNA replication. The polypeptide is Nucleolar complex-associated protein 3 (Arabidopsis thaliana (Mouse-ear cress)).